Here is a 405-residue protein sequence, read N- to C-terminus: Cysteine desulfurase IscS (405 aa).

Asn-156 lines the pyridoxal 5'-phosphate pocket. Position 207 is an N6-(pyridoxal phosphate)lysine (Lys-207). Cys-329 functions as the Cysteine persulfide intermediate in the catalytic mechanism. [2Fe-2S] cluster is bound at residue Cys-329.

This sequence belongs to the class-V pyridoxal-phosphate-dependent aminotransferase family. NifS/IscS subfamily. As to quaternary structure, homodimer. Forms a heterotetramer with IscU, interacts with other sulfur acceptors. Pyridoxal 5'-phosphate serves as cofactor.

It is found in the cytoplasm. It carries out the reaction (sulfur carrier)-H + L-cysteine = (sulfur carrier)-SH + L-alanine. It functions in the pathway cofactor biosynthesis; iron-sulfur cluster biosynthesis. Functionally, master enzyme that delivers sulfur to a number of partners involved in Fe-S cluster assembly, tRNA modification or cofactor biosynthesis. Catalyzes the removal of elemental sulfur atoms from cysteine to produce alanine. Functions as a sulfur delivery protein for Fe-S cluster synthesis onto IscU, an Fe-S scaffold assembly protein, as well as other S acceptor proteins. The protein is Cysteine desulfurase IscS of Dechloromonas aromatica (strain RCB).